The chain runs to 149 residues: 3-dehydroquinate dehydratase (149 aa).

The active-site Proton acceptor is the Tyr-26. Substrate contacts are provided by Asn-77, His-83, and Asp-90. Residue His-103 is the Proton donor of the active site. Substrate is bound by residues 104–105 and Arg-114; that span reads LS.

Belongs to the type-II 3-dehydroquinase family. In terms of assembly, homododecamer.

It carries out the reaction 3-dehydroquinate = 3-dehydroshikimate + H2O. It participates in metabolic intermediate biosynthesis; chorismate biosynthesis; chorismate from D-erythrose 4-phosphate and phosphoenolpyruvate: step 3/7. Its function is as follows. Catalyzes a trans-dehydration via an enolate intermediate. This is 3-dehydroquinate dehydratase from Aeromonas hydrophila subsp. hydrophila (strain ATCC 7966 / DSM 30187 / BCRC 13018 / CCUG 14551 / JCM 1027 / KCTC 2358 / NCIMB 9240 / NCTC 8049).